The primary structure comprises 181 residues: Inner membrane-spanning protein YciB (181 aa).

Transmembrane regions (helical) follow at residues 3–23 (FLFDLFPVILFFITFKIYGIY), 49–69 (TMLWVSLVLIVVFGSATLILQ), 76–96 (WKPSVLYWLFAAALLIAQAIF), 119–139 (VNASWAAFFAFMGAANLYVAF), and 149–169 (FKLFGFMGLMLVFVVLQGLML).

This sequence belongs to the YciB family.

Its subcellular location is the cell inner membrane. Plays a role in cell envelope biogenesis, maintenance of cell envelope integrity and membrane homeostasis. The chain is Inner membrane-spanning protein YciB from Nitrosospira multiformis (strain ATCC 25196 / NCIMB 11849 / C 71).